The chain runs to 188 residues: Protein GrpE (188 aa).

A disordered region spans residues 1–24 (MSDENKPGEAAELDAGVAPEAQPE).

It belongs to the GrpE family. As to quaternary structure, homodimer.

It localises to the cytoplasm. In terms of biological role, participates actively in the response to hyperosmotic and heat shock by preventing the aggregation of stress-denatured proteins, in association with DnaK and GrpE. It is the nucleotide exchange factor for DnaK and may function as a thermosensor. Unfolded proteins bind initially to DnaJ; upon interaction with the DnaJ-bound protein, DnaK hydrolyzes its bound ATP, resulting in the formation of a stable complex. GrpE releases ADP from DnaK; ATP binding to DnaK triggers the release of the substrate protein, thus completing the reaction cycle. Several rounds of ATP-dependent interactions between DnaJ, DnaK and GrpE are required for fully efficient folding. The sequence is that of Protein GrpE from Hyphomonas neptunium (strain ATCC 15444).